The primary structure comprises 569 residues: Sulfite reductase [NADPH] hemoprotein beta-component (569 aa).

C434, C440, C479, and C483 together coordinate [4Fe-4S] cluster. C483 contributes to the siroheme binding site.

It belongs to the nitrite and sulfite reductase 4Fe-4S domain family. Alpha(8)-beta(8). The alpha component is a flavoprotein, the beta component is a hemoprotein. Siroheme is required as a cofactor. Requires [4Fe-4S] cluster as cofactor.

The catalysed reaction is hydrogen sulfide + 3 NADP(+) + 3 H2O = sulfite + 3 NADPH + 4 H(+). Its pathway is sulfur metabolism; hydrogen sulfide biosynthesis; hydrogen sulfide from sulfite (NADPH route): step 1/1. Its function is as follows. Component of the sulfite reductase complex that catalyzes the 6-electron reduction of sulfite to sulfide. This is one of several activities required for the biosynthesis of L-cysteine from sulfate. The sequence is that of Sulfite reductase [NADPH] hemoprotein beta-component from Staphylococcus saprophyticus subsp. saprophyticus (strain ATCC 15305 / DSM 20229 / NCIMB 8711 / NCTC 7292 / S-41).